The primary structure comprises 367 residues: Peptide chain release factor 2 (367 aa).

The residue at position 254 (Q254) is an N5-methylglutamine.

It belongs to the prokaryotic/mitochondrial release factor family. Post-translationally, methylated by PrmC. Methylation increases the termination efficiency of RF2.

Its subcellular location is the cytoplasm. Its function is as follows. Peptide chain release factor 2 directs the termination of translation in response to the peptide chain termination codons UGA and UAA. This chain is Peptide chain release factor 2, found in Bordetella avium (strain 197N).